The chain runs to 370 residues: MSGELEAKSRGDTQSHEQKLCYRWTISNFSFFVEETEEYITSLVFSLEDNDKMTWCLRVYPTGVDEKNKDYVSLYLILLSCEKGSVWAKFEVCILNAKGEKCNTERIPSFSRIQPHQPFGFEKFITRDSFLSPAQVLTPDDKFTLLCKVSVLQDSFSISGQNPRPAIKVTRCTLENDVGELWENPLFTDCSLLVAGHEFRAHKAILAARSPVFRAMFEHEMEERLTNCVEIHDLDPQVFKEMMGFIYTGKVPHLHSHSMACDLLAAADRYGLEDLMVMCEDALCRSLSVENAAHTLIVADLHSTEHLKTQALDFIIVYASEVSKTSGWMSMVESHPRLVAEAFHSLASAQRVFWALPFKQLKWSLRPTQL.

In terms of domain architecture, MATH spans 19-149 (KLCYRWTISN…DDKFTLLCKV (131 aa)). The region spanning 188–251 (TDCSLLVAGH…MMGFIYTGKV (64 aa)) is the BTB domain.

Belongs to the Tdpoz family.

The polypeptide is TD and POZ domain-containing protein 4 (Mus musculus (Mouse)).